Consider the following 315-residue polypeptide: HTH-type transcriptional regulator TreR (315 aa).

An HTH lacI-type domain is found at 5–59 (LTIKDIARLSGVGKSTVSRVLNNESGVSERTRERVEAVMNQHGFSPSRSARAMRG). A DNA-binding region (H-T-H motif) is located at residues 7–26 (IKDIARLSGVGKSTVSRVLN). Residues 71–77 (RLDSLSE), Gly-126, Arg-147, 187–190 (DITT), Arg-194, Thr-242, and Tyr-284 contribute to the alpha,alpha-trehalose 6-phosphate site.

As to quaternary structure, homodimer.

Functionally, repressor of the treBC operon. It is able to bind trehalose-6-phosphate. In Salmonella typhimurium (strain LT2 / SGSC1412 / ATCC 700720), this protein is HTH-type transcriptional regulator TreR (treR).